Reading from the N-terminus, the 116-residue chain is Staphylococcal complement inhibitor (116 aa).

Positions 1–31 are cleaved as a signal peptide; sequence MKIRKSILAGTLAIVLASPLVTNLDKNEAQA. The interval 62–79 is essential for activity; the sequence is LATGSLNTYYKRTIKISG.

This sequence belongs to the SCIN family.

Its subcellular location is the secreted. In terms of biological role, involved in countering the first line of host defense mechanisms. Efficiently inhibits opsonization, phagocytosis and killing of S.aureus by human neutrophils. Acts by binding and stabilizing human C3 convertases (C4b2a and C3bBb), leading to their inactivation. The convertases are no longer able to cleave complement C3, therefore preventing further C3b deposition on the bacterial surface and phagocytosis of the bacterium. Also prevents C5a-induced neutrophil responses. The chain is Staphylococcal complement inhibitor (scn) from Staphylococcus aureus (strain N315).